The sequence spans 360 residues: Photosystem II protein D1 (360 aa).

The next 3 helical transmembrane spans lie at 29–46 (YIGW…TATS), 118–133 (HFLL…EWEF), and 142–156 (WISV…AASA). Residue His-118 participates in chlorophyll a binding. Residue Tyr-126 participates in pheophytin a binding. [CaMn4O5] cluster is bound by residues Asp-170 and Glu-189. The chain crosses the membrane as a helical span at residues 197-218 (LHQLGVAGVFGGSLFSAMHGSL). His-198 serves as a coordination point for chlorophyll a. Residues His-215 and 264–265 (SF) each bind a quinone. Residue His-215 coordinates Fe cation. His-272 lines the Fe cation pocket. The helical transmembrane segment at 274–288 (FLGLWPVVGIWFTSM) threads the bilayer. Positions 332, 333, 342, and 344 each coordinate [CaMn4O5] cluster. Positions 345–360 (SNESLPLALVAPAING) are excised as a propeptide.

The protein belongs to the reaction center PufL/M/PsbA/D family. PSII is composed of 1 copy each of membrane proteins PsbA, PsbB, PsbC, PsbD, PsbE, PsbF, PsbH, PsbI, PsbJ, PsbK, PsbL, PsbM, PsbT, PsbX, PsbY, PsbZ, Psb30/Ycf12, at least 3 peripheral proteins of the oxygen-evolving complex and a large number of cofactors. It forms dimeric complexes. The cofactor is The D1/D2 heterodimer binds P680, chlorophylls that are the primary electron donor of PSII, and subsequent electron acceptors. It shares a non-heme iron and each subunit binds pheophytin, quinone, additional chlorophylls, carotenoids and lipids. D1 provides most of the ligands for the Mn4-Ca-O5 cluster of the oxygen-evolving complex (OEC). There is also a Cl(-1) ion associated with D1 and D2, which is required for oxygen evolution. The PSII complex binds additional chlorophylls, carotenoids and specific lipids.. Post-translationally, tyr-161 forms a radical intermediate that is referred to as redox-active TyrZ, YZ or Y-Z. C-terminally processed by CTPA; processing is essential to allow assembly of the oxygen-evolving complex and thus photosynthetic growth.

The protein resides in the plastid. The protein localises to the chloroplast thylakoid membrane. It catalyses the reaction 2 a plastoquinone + 4 hnu + 2 H2O = 2 a plastoquinol + O2. Photosystem II (PSII) is a light-driven water:plastoquinone oxidoreductase that uses light energy to abstract electrons from H(2)O, generating O(2) and a proton gradient subsequently used for ATP formation. It consists of a core antenna complex that captures photons, and an electron transfer chain that converts photonic excitation into a charge separation. The D1/D2 (PsbA/PsbD) reaction center heterodimer binds P680, the primary electron donor of PSII as well as several subsequent electron acceptors. In Antithamnion sp. (Red alga), this protein is Photosystem II protein D1.